Here is a 276-residue protein sequence, read N- to C-terminus: Apulose-4-phosphate transketolase subunit A (276 aa).

Belongs to the transketolase family. As to quaternary structure, probable heterodimer composed of AptA and AptB. Requires thiamine diphosphate as cofactor.

The catalysed reaction is apulose 4-phosphate + D-glyceraldehyde 3-phosphate = D-xylulose 5-phosphate + dihydroxyacetone phosphate. The protein operates within carbohydrate metabolism. Involved in catabolism of D-apiose. Catalyzes the transfer of the glycolaldehyde group from apulose-4-phosphate to D-glyceraldehyde 3-phosphate, generating dihydroxyacetone phosphate and D-xylulose-5-phosphate. This Actinobacillus succinogenes (strain ATCC 55618 / DSM 22257 / CCUG 43843 / 130Z) protein is Apulose-4-phosphate transketolase subunit A.